The sequence spans 1594 residues: NAD-specific glutamate dehydrogenase (1594 aa).

Lys816 is a catalytic residue.

It belongs to the Glu/Leu/Phe/Val dehydrogenases family. As to quaternary structure, interacts with (unphosphorylated) GarA.

It catalyses the reaction L-glutamate + NAD(+) + H2O = 2-oxoglutarate + NH4(+) + NADH + H(+). Its activity is regulated as follows. Activity is inhibited by unphosphorylated GarA. Stimulated by manganese and magnesium. Functionally, catalyzes the reversible conversion of L-glutamate to 2-oxoglutarate. Highly specific for NAD. The chain is NAD-specific glutamate dehydrogenase (gdh) from Mycolicibacterium smegmatis (strain ATCC 700084 / mc(2)155) (Mycobacterium smegmatis).